The following is an 880-amino-acid chain: Probable potassium channel AKT5 (880 aa).

At 1 to 82 the chain is on the cytoplasmic side; it reads MGIEKRKKMV…PFDPRYRAWD (82 aa). A helical membrane pass occupies residues 83–103; the sequence is WFLVILVLYTAWASPFEFGFL. Residues 104 to 111 are Extracellular-facing; the sequence is QTPRAPLS. The helical transmembrane segment at 112 to 132 threads the bilayer; that stretch reads ILDNVVNGFFAVDIVLTFFVA. Topologically, residues 133–153 are cytoplasmic; sequence FLDKATYLLVDDPKRIAWRYT. The helical transmembrane segment at 154–174 threads the bilayer; it reads STWLIFDVVSTVPYELFGSLL. At 175 to 182 the chain is on the extracellular side; that stretch reads HNTIQGYG. The helical; Voltage-sensor transmembrane segment at 183 to 203 threads the bilayer; it reads IFSMLRLWRLHRVSKCFARLE. Residues 204-217 are Cytoplasmic-facing; the sequence is KDRKYNYFWIRCTK. Residues 218–238 form a helical membrane-spanning segment; the sequence is LLLVSLFVVHCGACFCYSIAA. Over 239–265 the chain is Extracellular; that stretch reads HYPDPSMTFMALAEANWKQKSLLIRYV. The segment at residues 266–285 is an intramembrane region (pore-forming); the sequence is TAMYWSITTFSTTGYGDIHG. Residues 286-291 lie on the Extracellular side of the membrane; the sequence is NNAEER. Residues 292–312 form a helical membrane-spanning segment; it reads AFILFYMIFNLGLLAYIIGNM. At 313–880 the chain is on the cytoplasmic side; it reads TNLVVHVTSR…GDFLLLLKVS (568 aa). 396-517 contributes to the a nucleoside 3',5'-cyclic phosphate binding site; sequence LFHGISNDLL…IMNNLLQHLK (122 aa). ANK repeat units lie at residues 541-570, 574-603, 607-636, 637-667, and 671-700; these read DLPL…NPNE, NGRT…DPNI, EGSV…TLSF, DTVG…DISL, and NGTT…DMDK. Residues 809–880 enclose the KHA domain; it reads VGGVYPARVT…GDFLLLLKVS (72 aa).

The protein belongs to the potassium channel family. Plant (TC 1.A.1.4) subfamily. In terms of assembly, the potassium channel is probably composed of a homo- or heterotetrameric complex of pore-forming subunits. Predominantly expressed in flowers.

Its subcellular location is the membrane. Probable potassium channel. May interact with the cytoskeleton or with regulatory proteins. The protein is Probable potassium channel AKT5 (AKT5) of Arabidopsis thaliana (Mouse-ear cress).